We begin with the raw amino-acid sequence, 154 residues long: MKIRVYCISKPEKDAYAELGEHFKKLARSFNVELEILDIFNKQIAQAQKAANEAESSLAYKEALQRYLSGAHNIALTPEGKLYDSHAFSQIFHHKQEVNFFIGGAYGFEPGFLKSCHQSLSLSPLTLGHKVAKVVLCEQIYRGLTIMHNHPYHK.

Residues leucine 76, glycine 103, and 122–127 each bind S-adenosyl-L-methionine; that span reads LSPLTL.

The protein belongs to the RNA methyltransferase RlmH family. In terms of assembly, homodimer.

It is found in the cytoplasm. It catalyses the reaction pseudouridine(1915) in 23S rRNA + S-adenosyl-L-methionine = N(3)-methylpseudouridine(1915) in 23S rRNA + S-adenosyl-L-homocysteine + H(+). In terms of biological role, specifically methylates the pseudouridine at position 1915 (m3Psi1915) in 23S rRNA. The chain is Ribosomal RNA large subunit methyltransferase H from Wolinella succinogenes (strain ATCC 29543 / DSM 1740 / CCUG 13145 / JCM 31913 / LMG 7466 / NCTC 11488 / FDC 602W) (Vibrio succinogenes).